A 267-amino-acid polypeptide reads, in one-letter code: MHDSGGVQMARALKHAALCLMLLPRFLLAAVMLWLLDFLCIRKKVLLKMGERQDGPDDPPVCVSDSNKMFTLESLRAVWYGQKLDFLKSAHLGRTAPNTEVMLVQERRQVRILDCMKGKRPLILNFGSCSUPPFMTRLAAFQRVVSQYADIADFLVVYIEEAHPSDGWVSSDAPYQIPKHRCLEDRLRAAQLMLAEVPGSNVVVDNMDNSSNAAYGAYFERLYIVRDERVVYQGGRGPEGYRISELRNWLEQYRNGLVNSQTAVLHV.

Residues 1–15 (MHDSGGVQMARALKH) are Cytoplasmic-facing. A helical; Signal-anchor for type II membrane protein transmembrane segment spans residues 16–36 (AALCLMLLPRFLLAAVMLWLL). Over 37–267 (DFLCIRKKVL…VNSQTAVLHV (231 aa)) the chain is Extracellular. The active site involves Sec131. Sec131 is a non-standard amino acid (selenocysteine).

It belongs to the iodothyronine deiodinase family. As to quaternary structure, monomer. Homodimer. May undergo minor heretodimerization with DIO1 and DIO2.

It is found in the cell membrane. The protein localises to the endosome membrane. It carries out the reaction 3,3',5'-triiodo-L-thyronine + iodide + A + H(+) = L-thyroxine + AH2. It catalyses the reaction 3,3'-diiodo-L-thyronine + iodide + A + H(+) = 3,3',5-triiodo-L-thyronine + AH2. The enzyme catalyses 3-iodo-L-thyronine + iodide + A + H(+) = 3,5-diiodo-L-thyronine + AH2. The catalysed reaction is L-thyronine + iodide + A + H(+) = 3-iodo-L-thyronine + AH2. It carries out the reaction 3',5'-diiodo-L-thyronine + iodide + A + H(+) = 3,3',5'-triiodo-L-thyronine + AH2. It catalyses the reaction 3'-iodo-L-thyronine + iodide + A + H(+) = 3,3'-diiodo-L-thyronine + AH2. The enzyme catalyses 3,3',5'-triiodothyronamine + iodide + A + H(+) = 3,3',5,5'-tetraiodothyronamine + AH2. The catalysed reaction is 3',5'-diiodothyronamine + iodide + A + H(+) = 3,3',5'-triiodothyronamine + AH2. It carries out the reaction 3,3'-diiodothyronamine + iodide + A + H(+) = 3,3',5-triiodothyronamine + AH2. It catalyses the reaction 3-iodothyronamine + iodide + A + H(+) = 3,5-diiodothyronamine + AH2. The enzyme catalyses 3'-iodothyronamine + iodide + A + H(+) = 3,3'-diiodothyronamine + AH2. The catalysed reaction is thyronamine + iodide + A + H(+) = 3-iodothyronamine + AH2. Plays a crucial role in the metabolism of thyroid hormones (TH) and has specific roles in TH activation and inactivation by deiodination. Catalyzes the deiodination of L-thyroxine (T4) to 3,3',5'-triiodothyronine (rT3), 3,5,3'-triiodothyronine (T3) to 3,3'-diiodothyronine (3,3'-T2), 3,5-diiodothyronine (3,5-T2) to 3-monoiodothyronine (3-T1), rT3 to 3',5'-diiodothyronine (3',5'-T2) and 3,3'-T2 to 3'-monoiodothyronine (3'-T1) via inner-ring deiodination (IRD). Catalyzes the deiodination of 3-T1 to L-thyronine (T0) via outer-ring deiodination (ORD). Catalyzes the tyrosyl ring deiodinations of 3,3',5,5'-tetraiodothyronamine, 3,3',5'-triiodothyronamine, 3,5,3'-triiodothyronamine, 3,5-diiodothyronamine, 3,3'-diiodothyronamine and 3-iodothyronamine. The sequence is that of Thyroxine 5-deiodinase (dio3) from Sparus aurata (Gilthead sea bream).